Here is a 388-residue protein sequence, read N- to C-terminus: GTPase Obg (388 aa).

The 159-residue stretch at 1–159 (MKFVDEAVIR…RSLKLELLLL (159 aa)) folds into the Obg domain. One can recognise an OBG-type G domain in the interval 160–333 (ADVGLLGMPN…LATKLLDFIQ (174 aa)). Residues 166–173 (GMPNAGKS), 191–195 (FTTLV), 213–216 (DIPG), 283–286 (NKAD), and 314–316 (SAY) each bind GTP. Mg(2+)-binding residues include S173 and T193.

It belongs to the TRAFAC class OBG-HflX-like GTPase superfamily. OBG GTPase family. As to quaternary structure, monomer. Requires Mg(2+) as cofactor.

It is found in the cytoplasm. Functionally, an essential GTPase which binds GTP, GDP and possibly (p)ppGpp with moderate affinity, with high nucleotide exchange rates and a fairly low GTP hydrolysis rate. Plays a role in control of the cell cycle, stress response, ribosome biogenesis and in those bacteria that undergo differentiation, in morphogenesis control. This is GTPase Obg from Shewanella sp. (strain MR-4).